Consider the following 438-residue polypeptide: 23S rRNA (uracil(1939)-C(5))-methyltransferase RlmD (438 aa).

The region spanning 4 to 68 (FYTPGRRTAT…RHFARGRVTR (65 aa)) is the TRAM domain. Cysteine 81, cysteine 87, cysteine 90, and cysteine 167 together coordinate [4Fe-4S] cluster. Residues glutamine 269, phenylalanine 298, asparagine 303, glutamate 319, asparagine 346, and aspartate 367 each contribute to the S-adenosyl-L-methionine site. Cysteine 393 serves as the catalytic Nucleophile.

The protein belongs to the class I-like SAM-binding methyltransferase superfamily. RNA M5U methyltransferase family. RlmD subfamily.

The catalysed reaction is uridine(1939) in 23S rRNA + S-adenosyl-L-methionine = 5-methyluridine(1939) in 23S rRNA + S-adenosyl-L-homocysteine + H(+). Functionally, catalyzes the formation of 5-methyl-uridine at position 1939 (m5U1939) in 23S rRNA. This chain is 23S rRNA (uracil(1939)-C(5))-methyltransferase RlmD, found in Edwardsiella ictaluri (strain 93-146).